The sequence spans 299 residues: Taste receptor type 2 member 4 (299 aa).

Residues 1-9 lie on the Extracellular side of the membrane; it reads MLRLFYFSA. A helical transmembrane segment spans residues 10-30; that stretch reads IIASVILNFVGIIMNLFITVV. Residues 31-46 are Cytoplasmic-facing; the sequence is NCKTWVKSHRISSSDR. The chain crosses the membrane as a helical span at residues 47–67; sequence ILFSLGITRFLMLGLFLVNTI. The Extracellular segment spans residues 68–81; that stretch reads YFVSSNXERSVYLS. The chain crosses the membrane as a helical span at residues 82–102; sequence AFFVLCFMFLDSSSLWFVTLL. The Cytoplasmic portion of the chain corresponds to 103–131; it reads NILYCVKITNFQHSVFLLLKRNISPKIPR. A helical transmembrane segment spans residues 132–152; it reads LLLACVLISAFTTCLYITLSQ. At 153 to 172 the chain is on the extracellular side; that stretch reads ASPFPELVTTRNNTSFNINE. N-linked (GlcNAc...) asparagine glycans are attached at residues Asn164 and Asn165. Residues 173-193 traverse the membrane as a helical segment; it reads GILSLVVSLVLSSSLQFIINV. Over 194 to 230 the chain is Cytoplasmic; that stretch reads TSASLLIHSLRRHIQKMQKNATGFWNPQTEAHVGAMK. The chain crosses the membrane as a helical span at residues 231 to 251; sequence LMVYFLILYIPYSVATLVQYL. Residues 252–262 are Extracellular-facing; that stretch reads PFYAGMDMGTK. Residues 263–283 traverse the membrane as a helical segment; sequence SICLIFATLYSPGHSVLIIIT. The Cytoplasmic portion of the chain corresponds to 284–299; that stretch reads HPKLKTTAKKILCFKK.

The protein belongs to the G-protein coupled receptor T2R family.

It is found in the membrane. The protein resides in the cell projection. It localises to the cilium membrane. Gustducin-coupled receptor implicated in the perception of bitter compounds in the oral cavity and the gastrointestinal tract. Signals through PLCB2 and the calcium-regulated cation channel TRPM5. In airway epithelial cells, binding of denatonium increases the intracellular calcium ion concentration and stimulates ciliary beat frequency. The chain is Taste receptor type 2 member 4 (TAS2R4) from Pan troglodytes (Chimpanzee).